A 97-amino-acid chain; its full sequence is Small ribosomal subunit protein bS20 (97 aa).

Over residues 76–85 the composition is skewed to basic residues; that stretch reads RNNGARKKAG. The interval 76 to 97 is disordered; sequence RNNGARKKAGLAKALQKVSQAS. Residues 86–97 show a composition bias toward low complexity; sequence LAKALQKVSQAS.

Belongs to the bacterial ribosomal protein bS20 family.

Functionally, binds directly to 16S ribosomal RNA. The polypeptide is Small ribosomal subunit protein bS20 (Microcystis aeruginosa (strain NIES-843 / IAM M-2473)).